Reading from the N-terminus, the 56-residue chain is Stable protein 1 (56 aa).

A Stress-response A/B barrel domain is found at 1 to 44; the sequence is GYTHAFESTFESKSGLQEYLDSAALAAFAEGFLPTLSQRSFNWG.

This Populus euphratica (Euphrates poplar) protein is Stable protein 1.